The chain runs to 730 residues: Kinesin-like protein KIF2C (730 aa).

Positions 1-256 (MERLVATRLV…MDCHRISMAD (256 aa)) are globular. A disordered region spans residues 79-98 (NMPPQRNVSSQNHKRKTISK). The interval 211–242 (EQRAQNYERRMKRAQDYDTSVPNWEFGKMIKE) is negative regulator of microtubule-binding. Positions 262 to 592 (RICVCVRKRP…LRYADRVKEL (331 aa)) constitute a Kinesin motor domain. ATP-binding positions include arginine 268 and 352–359 (GQTGSGKT). A coiled-coil region spans residues 599–730 (TNDDNLQMED…QISKKKRSNK (132 aa)).

This sequence belongs to the TRAFAC class myosin-kinesin ATPase superfamily. Kinesin family. MCAK/KIF2 subfamily.

It is found in the cytoplasm. The protein localises to the cytoskeleton. Its subcellular location is the nucleus. It localises to the chromosome. The protein resides in the centromere. It is found in the kinetochore. Its function is as follows. Promotes ATP-dependent removal of tubulin dimers from microtubules. Regulates the turnover of microtubules at the kinetochore and functions in chromosome segregation during mitosis. May play a role in chromosome congression and may be required for the lateral to end-on conversion of the chromosome-microtubule attachment. This is Kinesin-like protein KIF2C (kif2c) from Xenopus laevis (African clawed frog).